A 133-amino-acid chain; its full sequence is ELEKEFQKQKYLSTPDRLDLAQSLGLTQLQVKTWYQNRRMKWKKMVLKGGQEAPTKPKGRPKKNSIPTSEEIEAEEKLNSQVQSQELREPSQGLEGLCDTQEPKARVVPVEVAESPGQAQELPVTSPEPPPSS.

Residues 1–46 (ELEKEFQKQKYLSTPDRLDLAQSLGLTQLQVKTWYQNRRMKWKKMV) constitute a DNA-binding region (homeobox). The segment at 45 to 133 (MVLKGGQEAP…VTSPEPPPSS (89 aa)) is disordered.

It belongs to the BAR homeobox family. Expressed in keratinizing epithelia such as wool follicle, tongue and esophagus. Expressed at low level in thymus. Not detected in spleen, skeletal muscle, brain, heart kidney, liver and lung.

It is found in the nucleus. Transcription factor. Binds optimally to the DNA consensus sequence 5'-YYTAATGRTTTTY-3'. May control the expression of neural adhesion molecules such as L1 or Ng-CAM during embryonic development of both the central and peripherical nervous system. May be involved in controlling adhesive processes in keratinizing epithelia. This chain is Homeobox protein BarH-like 2 (BARX2), found in Ovis aries (Sheep).